The chain runs to 315 residues: Pantothenate kinase (315 aa).

Position 94 to 101 (94 to 101 (GSVAVGKS)) interacts with ATP.

Belongs to the prokaryotic pantothenate kinase family.

The protein resides in the cytoplasm. The catalysed reaction is (R)-pantothenate + ATP = (R)-4'-phosphopantothenate + ADP + H(+). It participates in cofactor biosynthesis; coenzyme A biosynthesis; CoA from (R)-pantothenate: step 1/5. This is Pantothenate kinase from Citrobacter koseri (strain ATCC BAA-895 / CDC 4225-83 / SGSC4696).